We begin with the raw amino-acid sequence, 327 residues long: Olfactory receptor 9G4 (327 aa).

Residues 1–43 (MIFPSHDSQAFTSVDMEVGNCTILTEFILLGFSADSQWQPILF) lie on the Extracellular side of the membrane. An N-linked (GlcNAc...) asparagine glycan is attached at N20. The helical transmembrane segment at 44 to 64 (GVFLMLYLITLSGNMTLVILI) threads the bilayer. Topologically, residues 65 to 71 (RTDSHLH) are cytoplasmic. The helical transmembrane segment at 72-92 (TPMYFFIGNLSFLDFWYTSVY) threads the bilayer. At 93–113 (TPKILASCVSEDKRISLAGCG) the chain is on the extracellular side. Cysteines 112 and 194 form a disulfide. Residues 114–134 (AQLFFSCVVAYTECYLLAAMA) form a helical membrane-spanning segment. At 135–152 (YDRHAAICNPLLYSGTMS) the chain is on the cytoplasmic side. The helical transmembrane segment at 153 to 173 (TALCTGLVAGSYIGGFLNAIA) threads the bilayer. Topologically, residues 174 to 212 (HTANTFRLHFCGKNIIDHFFCDAPPLVKMSCTNTRVYEK) are extracellular. Residues 213–233 (VLLGVVGFTVLSSILAILISY) traverse the membrane as a helical segment. Residues 234–252 (VNILLAILRIHSASGRHKA) lie on the Cytoplasmic side of the membrane. The chain crosses the membrane as a helical span at residues 253–273 (FSTCASHLISVMLFYGSLLFM). The Extracellular segment spans residues 274-286 (YSRPSSTYSLERD). The chain crosses the membrane as a helical span at residues 287 to 307 (KVAALFYTVINPLLNPLIYSL). Residues 308–327 (RNKDIKEAFRKATQTIQPQT) are Cytoplasmic-facing.

This sequence belongs to the G-protein coupled receptor 1 family.

It localises to the cell membrane. Odorant receptor. This is Olfactory receptor 9G4 (OR9G4) from Homo sapiens (Human).